A 437-amino-acid polypeptide reads, in one-letter code: Ribosomal protein uS12 methylthiotransferase RimO (437 aa).

Residues 4 to 114 (PRVSFVSLGC…VMSAVHEAVP (111 aa)) enclose the MTTase N-terminal domain. Cys13, Cys49, Cys78, Cys145, Cys149, and Cys152 together coordinate [4Fe-4S] cluster. The Radical SAM core domain maps to 131–369 (LTPRHYAYLK…MAKQQQISTN (239 aa)). A TRAM domain is found at 372–437 (KKKVGKRLPV…DAYDLHGIAV (66 aa)).

Belongs to the methylthiotransferase family. RimO subfamily. [4Fe-4S] cluster serves as cofactor.

The protein localises to the cytoplasm. It catalyses the reaction L-aspartate(89)-[ribosomal protein uS12]-hydrogen + (sulfur carrier)-SH + AH2 + 2 S-adenosyl-L-methionine = 3-methylsulfanyl-L-aspartate(89)-[ribosomal protein uS12]-hydrogen + (sulfur carrier)-H + 5'-deoxyadenosine + L-methionine + A + S-adenosyl-L-homocysteine + 2 H(+). Its function is as follows. Catalyzes the methylthiolation of an aspartic acid residue of ribosomal protein uS12. The sequence is that of Ribosomal protein uS12 methylthiotransferase RimO from Brucella anthropi (strain ATCC 49188 / DSM 6882 / CCUG 24695 / JCM 21032 / LMG 3331 / NBRC 15819 / NCTC 12168 / Alc 37) (Ochrobactrum anthropi).